Consider the following 370-residue polypeptide: MTTQKQHQQQHHLQSGQEKNKALTLIICVCGLYGTFLTWSILQERINTKPYGDNNEYFKAPIIINLIQALFASIIGFIYNYVTTTTTSTKTTTKTKTKTNSNPFSIFFTNGKQNCNVLKFMILISITSSIASPIGYKSLKHLDYLAYLLAKSCKLIPVMIVHFIFYQTKFPNYKYLVAGLVTLGVILFTMAHVTTKTKINDGNTLLGLTYLIGSMILDGLTNSTQDQLFKLPLENKLTSGKLMSLLNLFIFIWTSLYTIIFHKYEIDYTINFINNYPELLIDIIGFAICGAIGQVFIFIILEKFDSIILITATVTRKMLSMILSVILFGHHLSWEQWVGVGLVFGGIGLEAFIKFKQQSQQKMKIKSKVA.

10 helical membrane passes run 22–42 (ALTL…WSIL), 62–82 (IIIN…YNYV), 115–135 (CNVL…SPIG), 145–165 (LAYL…HFIF), 175–195 (YLVA…HVTT), 204–224 (TLLG…TNST), 242–262 (LMSL…IIFH), 280–300 (LIDI…IFII), 307–327 (IILI…SVIL), and 333–353 (SWEQ…EAFI).

This sequence belongs to the nucleotide-sugar transporter family. SLC35B subfamily.

It is found in the endoplasmic reticulum membrane. Functionally, may be involved in specific transport of UDP-Gal from the cytosol to the Golgi lumen. Involved in the maintenance of optimal conditions for the folding of secretory pathway proteins in the endoplasmic reticulum. The polypeptide is UDP-galactose transporter homolog 1 (HUT1) (Candida albicans (strain SC5314 / ATCC MYA-2876) (Yeast)).